A 190-amino-acid polypeptide reads, in one-letter code: Guanylate kinase (190 aa).

Residues 3–185 (NYIFIISAPS…SLEQLCKYFE (183 aa)) enclose the Guanylate kinase-like domain. An ATP-binding site is contributed by 10–17 (APSGAGKS).

It belongs to the guanylate kinase family.

The protein localises to the cytoplasm. It catalyses the reaction GMP + ATP = GDP + ADP. Essential for recycling GMP and indirectly, cGMP. The protein is Guanylate kinase of Francisella tularensis subsp. holarctica (strain OSU18).